Reading from the N-terminus, the 62-residue chain is Conotoxin Sr5.7 (62 aa).

Residues 1-22 form the signal peptide; that stretch reads MRCLPVFVILLLLIASAPSVDA. Positions 23 to 44 are excised as a propeptide; sequence QLKTKDDVPLASFHDNAKGTQH.

This sequence belongs to the conotoxin T superfamily. In terms of processing, contains 2 disulfide bonds that can be either 'C1-C3, C2-C4' or 'C1-C4, C2-C3', since these disulfide connectivities have been observed for conotoxins with cysteine framework V (for examples, see AC P0DQQ7 and AC P81755). Expressed by the venom duct.

The protein localises to the secreted. In Conus spurius (Alphabet cone), this protein is Conotoxin Sr5.7.